Consider the following 89-residue polypeptide: Protein FAM25A (89 aa).

Belongs to the FAM25 family.

The polypeptide is Protein FAM25A (Mus musculus (Mouse)).